The following is a 336-amino-acid chain: MKIAIVNDMPMAIEALRRALAFEPAHQIIWVASNGADAVQRCVEQTPDLILMDLIMPVMDGVEATRRIMAETPCAIVIVTVDREQNMRRVFEAMGHGALDVVDTPAIGGPNPKEAAAPLLRKILNIDWLIGQRVGREHVVAAPRSEPARRDRLVAIGSSAGGPAALEILLKGLPVSFPAAIVLVQHVDQVFAAGMAEWLSSASGLPVRLAKEGETPQPGVVLLAGTNHHIRLLKDGTLAYTAEPVNEVYRPSINVFFESVTRYWSGEAVGVLLTGMGRDGAQGLKAMRERGFLTIAQDQASSAVYGMPKAAAAIDAAVEIRPLPAIAPRLVEVFTQ.

The 118-residue stretch at 2 to 119 (KIAIVNDMPM…PNPKEAAAPL (118 aa)) folds into the Response regulatory domain. Asp-53 is modified (4-aspartylphosphate). Positions 147–336 (PARRDRLVAI…APRLVEVFTQ (190 aa)) constitute a CheB-type methylesterase domain. Residues Ser-159, His-186, and Asp-279 contribute to the active site.

This sequence belongs to the CheB family. In terms of processing, phosphorylated by CheA. Phosphorylation of the N-terminal regulatory domain activates the methylesterase activity.

It localises to the cytoplasm. The enzyme catalyses [protein]-L-glutamate 5-O-methyl ester + H2O = L-glutamyl-[protein] + methanol + H(+). The catalysed reaction is L-glutaminyl-[protein] + H2O = L-glutamyl-[protein] + NH4(+). Functionally, involved in chemotaxis. Part of a chemotaxis signal transduction system that modulates chemotaxis in response to various stimuli. Catalyzes the demethylation of specific methylglutamate residues introduced into the chemoreceptors (methyl-accepting chemotaxis proteins or MCP) by CheR. Also mediates the irreversible deamidation of specific glutamine residues to glutamic acid. The polypeptide is Protein-glutamate methylesterase/protein-glutamine glutaminase 3 (Pseudomonas savastanoi pv. phaseolicola (strain 1448A / Race 6) (Pseudomonas syringae pv. phaseolicola (strain 1448A / Race 6))).